Here is a 599-residue protein sequence, read N- to C-terminus: CAP-Gly domain-containing linker protein 4 (599 aa).

ANK repeat units lie at residues 65-101 (TSVS…NVND), 149-180 (TNMN…DVDA), and 186-215 (NFGT…NPAF). One can recognise a CAP-Gly 1 domain in the interval 303 to 345 (GTTEFASGQWAGIELDEPEGKNNGSVGRVQYFKCAPKYGIFAP). The disordered stretch occupies residues 387 to 482 (SGLMTSKKEN…TSAANNTHRE (96 aa)). The segment covering 443–462 (LSTSSSSGKKTLSKSPSLPS) has biased composition (low complexity). Positions 468-478 (LKSSTTSAANN) are enriched in polar residues. The region spanning 505–547 (GTTNFAPGYWYGIELEKPHGKNDGSVGGVQYFSCSPRYGIFAP) is the CAP-Gly 2 domain. A Phosphoserine modification is found at Ser-557. Residues 565 to 599 (SSNKQNHSYPGFRRSFSTTSASSQKEINRRNAFAK) form a disordered region. Positions 576–587 (FRRSFSTTSASS) are enriched in low complexity.

The chain is CAP-Gly domain-containing linker protein 4 (Clip4) from Rattus norvegicus (Rat).